A 289-amino-acid polypeptide reads, in one-letter code: Glucosamine-6-phosphate deaminase 1 (289 aa).

Lys64 carries the N6-acetyllysine modification. The active-site Proton acceptor; for enolization step is the Asp72. Catalysis depends on Asp141, which acts as the For ring-opening step. The Proton acceptor; for ring-opening step role is filled by His143. The active-site For ring-opening step is Glu148. The residue at position 161 (Thr161) is a Phosphothreonine.

The protein belongs to the glucosamine/galactosamine-6-phosphate isomerase family. In terms of assembly, homohexamer.

It is found in the cytoplasm. It carries out the reaction alpha-D-glucosamine 6-phosphate + H2O = beta-D-fructose 6-phosphate + NH4(+). Its pathway is nucleotide-sugar biosynthesis; UDP-N-acetyl-alpha-D-glucosamine biosynthesis; alpha-D-glucosamine 6-phosphate from D-fructose 6-phosphate: step 1/1. With respect to regulation, allosterically activated by N-acetylglucosamine-6-phosphate (GlcNAc6P). In terms of biological role, catalyzes the reversible conversion of alpha-D-glucosamine 6-phosphate (GlcN-6P) into beta-D-fructose 6-phosphate (Fru-6P) and ammonium ion, a regulatory reaction step in de novo uridine diphosphate-N-acetyl-alpha-D-glucosamine (UDP-GlcNAc) biosynthesis via hexosamine pathway. Deamination is coupled to aldo-keto isomerization mediating the metabolic flux from UDP-GlcNAc toward Fru-6P. At high ammonium level can drive amination and isomerization of Fru-6P toward hexosamines and UDP-GlcNAc synthesis. Has a role in fine tuning the metabolic fluctuations of cytosolic UDP-GlcNAc and their effects on hyaluronan synthesis that occur during tissue remodeling. Seems to trigger calcium oscillations in mammalian eggs. These oscillations serve as the essential trigger for egg activation and early development of the embryo. The chain is Glucosamine-6-phosphate deaminase 1 from Homo sapiens (Human).